The chain runs to 121 residues: Acidic phospholipase A2 PLA-2 (121 aa).

7 disulfide bridges follow: Cys26–Cys115, Cys28–Cys44, Cys43–Cys95, Cys49–Cys121, Cys50–Cys88, Cys57–Cys81, and Cys75–Cys86. Ca(2+) contacts are provided by Tyr27, Gly29, and Gly31. Residue His47 is part of the active site. Position 48 (Asp48) interacts with Ca(2+). Asp89 is a catalytic residue.

The protein belongs to the phospholipase A2 family. Group II subfamily. D49 sub-subfamily. Ca(2+) serves as cofactor. Expressed by the venom gland.

Its subcellular location is the secreted. It carries out the reaction a 1,2-diacyl-sn-glycero-3-phosphocholine + H2O = a 1-acyl-sn-glycero-3-phosphocholine + a fatty acid + H(+). PLA2 catalyzes the calcium-dependent hydrolysis of the 2-acyl groups in 3-sn-phosphoglycerides. The chain is Acidic phospholipase A2 PLA-2 from Eristicophis macmahoni (Leaf-nosed viper).